An 86-amino-acid chain; its full sequence is Exopolysaccharide production repressor protein (86 aa).

Residues 18–38 (FAVTLAASVFLQVVYFLSLLF) traverse the membrane as a helical segment. Positions 44–86 (TRESDRSIHSGTRQADQPQKRDRDKTEQSNVPKLDPRRKRRTP) are disordered. The span at 61-70 (PQKRDRDKTE) shows a compositional bias: basic and acidic residues.

The protein localises to the cell membrane. It participates in glycan metabolism; exopolysaccharide biosynthesis. In terms of biological role, inhibition of exopolysaccharide synthesis (EPS) and nodulation ability (NOD). The protein is Exopolysaccharide production repressor protein (exoX) of Rhizobium leguminosarum bv. phaseoli.